An 867-amino-acid polypeptide reads, in one-letter code: Alanine--tRNA ligase (867 aa).

H559, H563, C661, and H665 together coordinate Zn(2+).

Belongs to the class-II aminoacyl-tRNA synthetase family. The cofactor is Zn(2+).

The protein resides in the cytoplasm. It catalyses the reaction tRNA(Ala) + L-alanine + ATP = L-alanyl-tRNA(Ala) + AMP + diphosphate. In terms of biological role, catalyzes the attachment of alanine to tRNA(Ala) in a two-step reaction: alanine is first activated by ATP to form Ala-AMP and then transferred to the acceptor end of tRNA(Ala). Also edits incorrectly charged Ser-tRNA(Ala) and Gly-tRNA(Ala) via its editing domain. This is Alanine--tRNA ligase from Aquifex aeolicus (strain VF5).